We begin with the raw amino-acid sequence, 524 residues long: Casein kinase I homolog 3 (524 aa).

A Protein kinase domain is found at 14-319 (YAVGPKIGEG…YLISLMDDAL (306 aa)). Residues 20 to 28 (IGEGSFGVI) and K60 each bind ATP. The active-site Proton acceptor is the D150. Disordered stretches follow at residues 352–414 (HGYG…KQQH) and 427–474 (PETH…EHNL). A compositionally biased stretch (low complexity) spans 360-373 (RVNGNTARNNVNTN). Polar residues-rich tracts occupy residues 374–413 (SKTR…TKQQ) and 429–474 (THSN…EHNL). Residues 444–447 (YDSI) carry the YXXZ targeting signal motif. 7 S-palmitoyl cysteine lipidation sites follow: C517, C518, C519, C520, C522, C523, and C524.

It belongs to the protein kinase superfamily. CK1 Ser/Thr protein kinase family. Casein kinase I subfamily.

Its subcellular location is the cell membrane. The protein localises to the nucleus membrane. The protein resides in the vacuole membrane. It catalyses the reaction L-seryl-[protein] + ATP = O-phospho-L-seryl-[protein] + ADP + H(+). The catalysed reaction is L-threonyl-[protein] + ATP = O-phospho-L-threonyl-[protein] + ADP + H(+). In terms of biological role, casein kinases are operationally defined by their preferential utilization of acidic proteins such as caseins as substrates. Phosphorylates MON1, inhibiting the guanine nucleotide exchange factor activity of the MON1-CCZ1 complex, possibly by preventing its recruitment to membranes by small GTPase RAB5 homologs. The sequence is that of Casein kinase I homolog 3 (YCK3) from Saccharomyces cerevisiae (strain ATCC 204508 / S288c) (Baker's yeast).